Here is a 609-residue protein sequence, read N- to C-terminus: Dihydroxy-acid dehydratase (609 aa).

D81 serves as a coordination point for Mg(2+). C122 provides a ligand contact to [2Fe-2S] cluster. Mg(2+) contacts are provided by D123 and K124. N6-carboxylysine is present on K124. Position 195 (C195) interacts with [2Fe-2S] cluster. E491 provides a ligand contact to Mg(2+). Catalysis depends on S517, which acts as the Proton acceptor.

This sequence belongs to the IlvD/Edd family. As to quaternary structure, homodimer. [2Fe-2S] cluster is required as a cofactor. Mg(2+) serves as cofactor.

The catalysed reaction is (2R)-2,3-dihydroxy-3-methylbutanoate = 3-methyl-2-oxobutanoate + H2O. It carries out the reaction (2R,3R)-2,3-dihydroxy-3-methylpentanoate = (S)-3-methyl-2-oxopentanoate + H2O. It participates in amino-acid biosynthesis; L-isoleucine biosynthesis; L-isoleucine from 2-oxobutanoate: step 3/4. It functions in the pathway amino-acid biosynthesis; L-valine biosynthesis; L-valine from pyruvate: step 3/4. In terms of biological role, functions in the biosynthesis of branched-chain amino acids. Catalyzes the dehydration of (2R,3R)-2,3-dihydroxy-3-methylpentanoate (2,3-dihydroxy-3-methylvalerate) into 2-oxo-3-methylpentanoate (2-oxo-3-methylvalerate) and of (2R)-2,3-dihydroxy-3-methylbutanoate (2,3-dihydroxyisovalerate) into 2-oxo-3-methylbutanoate (2-oxoisovalerate), the penultimate precursor to L-isoleucine and L-valine, respectively. The chain is Dihydroxy-acid dehydratase from Acinetobacter baumannii (strain AB0057).